A 625-amino-acid polypeptide reads, in one-letter code: FMRFamide-activated amiloride-sensitive sodium channel (625 aa).

The Cytoplasmic segment spans residues 1 to 67 (MKYTSAATKP…IVTSRDTKRK (67 aa)). A helical membrane pass occupies residues 68–89 (VIWALLVIAGFTAATLQLSLLV). At 90–536 (RKYLQFQVVE…LADLFADIGG (447 aa)) the chain is on the extracellular side. N-linked (GlcNAc...) asparagine glycans are attached at residues asparagine 134, asparagine 196, asparagine 303, asparagine 349, asparagine 365, asparagine 372, and asparagine 473. The chain crosses the membrane as a helical span at residues 537-557 (TLGLWMGISVLTIMELIELVI). The Cytoplasmic portion of the chain corresponds to 558-625 (RLTGLVFNSE…DFRRGVESPV (68 aa)). The segment at 570–591 (LPRGPTTVNNNNGSNNHSQSTS) is disordered. A compositionally biased stretch (low complexity) spans 575-591 (TTVNNNNGSNNHSQSTS).

The protein belongs to the amiloride-sensitive sodium channel (TC 1.A.6) family. In terms of tissue distribution, muscle and nervous tissue.

It is found in the membrane. FMRFamide-gated ionotropic receptor. This is FMRFamide-activated amiloride-sensitive sodium channel from Cornu aspersum (Brown garden snail).